A 685-amino-acid chain; its full sequence is Kinesin-like protein KIP2 (685 aa).

Disordered stretches follow at residues 11–46 and 63–101; these read EHVGSAGASLPQTPGSRSFALGAHPGPQKRIGGPAQ and SRPSSPYMQASPLLKGSESGGSAGSPQSPDAPSSASGAS. The span at 86 to 101 shows a compositional bias: low complexity; that stretch reads GSPQSPDAPSSASGAS. Residues 113–446 form the Kinesin motor domain; it reads NVSVAIRIKP…VRFASRAKNI (334 aa). ATP is bound at residue 185–192; it reads GMTGSGKT. Coiled-coil stretches lie at residues 464 to 486 and 520 to 663; these read IIQNLRKQLDEQHETIVMLRRSA and LEVE…SALS. The segment at 485–510 is disordered; the sequence is SAAAPSGNGSTSPLDSPGVGGTSLSE.

This sequence belongs to the TRAFAC class myosin-kinesin ATPase superfamily. Kinesin family.

It is found in the cytoplasm. It localises to the cytoskeleton. Functionally, required for assembly of the mitotic spindle. In Eremothecium gossypii (strain ATCC 10895 / CBS 109.51 / FGSC 9923 / NRRL Y-1056) (Yeast), this protein is Kinesin-like protein KIP2 (KIP2).